The chain runs to 182 residues: uncharacterized protein (182 aa).

Disordered regions lie at residues 1 to 73 (MMSG…YRSL) and 105 to 182 (SMST…HLNR). 2 stretches are compositionally biased toward low complexity: residues 43–68 (RPSPFLSPSSSSSQTSISPTPTETSS) and 105–121 (SMSTLELSSSTLSSPVT). Residues 122–131 (APAPPPPPTS) are compositionally biased toward pro residues.

This is an uncharacterized protein from Caenorhabditis elegans.